The primary structure comprises 499 residues: Heparin cofactor 2 (499 aa).

The signal sequence occupies residues 1 to 19; it reads MKHSLNALLIFLIITSAWG. Serine 37 is subject to Phosphoserine; by FAM20C. The N-linked (GlcNAc...) (complex) asparagine glycan is linked to asparagine 49. Residues 68–79 form a chemotactic activity region; that stretch reads DWIPEGEEDDDY. A run of 2 repeats spans residues 73–83 and 87–97. Residues 73 to 97 form a 2 X 11 AA approximate repeats, Asp/Glu-rich (acidic) (hirudin-like) region; that stretch reads GEEDDDYLDLEKIFSEDDDYIDIVD. Residues tyrosine 79 and tyrosine 92 each carry the sulfotyrosine modification. N-linked (GlcNAc...) asparagine glycosylation occurs at asparagine 188. Positions 192 to 212 are glycosaminoglycan-binding site; the sequence is KYEITTIHNLFRKLTHRLFRR. Asparagine 387 carries N-linked (GlcNAc...) asparagine glycosylation.

It belongs to the serpin family. Phosphorylated by FAM20C in the extracellular medium. Expressed predominantly in liver. Also present in plasma. As to expression, expressed in plasma (at protein level). Expressed in liver.

In terms of biological role, thrombin inhibitor activated by the glycosaminoglycans, heparin or dermatan sulfate. In the presence of the latter, HC-II becomes the predominant thrombin inhibitor in place of antithrombin III (AT-III). Also inhibits chymotrypsin, but in a glycosaminoglycan-independent manner. Functionally, peptides at the N-terminal of HC-II have chemotactic activity for both monocytes and neutrophils. Shows negligible inhibition, in vitro, of thrombin and tPA and no inhibition of factor Xa, in vitro. The sequence is that of Heparin cofactor 2 (SERPIND1) from Homo sapiens (Human).